The primary structure comprises 270 residues: 3-methyl-2-oxobutanoate hydroxymethyltransferase (270 aa).

Mg(2+)-binding residues include D43 and D82. Residues 43–44 (DS), D82, and K112 contribute to the 3-methyl-2-oxobutanoate site. Residue E114 participates in Mg(2+) binding. The Proton acceptor role is filled by E179.

Belongs to the PanB family. As to quaternary structure, homodecamer; pentamer of dimers. Requires Mg(2+) as cofactor.

It localises to the cytoplasm. The catalysed reaction is 3-methyl-2-oxobutanoate + (6R)-5,10-methylene-5,6,7,8-tetrahydrofolate + H2O = 2-dehydropantoate + (6S)-5,6,7,8-tetrahydrofolate. It functions in the pathway cofactor biosynthesis; (R)-pantothenate biosynthesis; (R)-pantoate from 3-methyl-2-oxobutanoate: step 1/2. In terms of biological role, catalyzes the reversible reaction in which hydroxymethyl group from 5,10-methylenetetrahydrofolate is transferred onto alpha-ketoisovalerate to form ketopantoate. This is 3-methyl-2-oxobutanoate hydroxymethyltransferase from Staphylococcus saprophyticus subsp. saprophyticus (strain ATCC 15305 / DSM 20229 / NCIMB 8711 / NCTC 7292 / S-41).